The chain runs to 666 residues: Endogenous retrovirus group K member 19 Gag polyprotein (666 aa).

G2 carries N-myristoyl glycine lipidation. Disordered regions lie at residues 170 to 189 (LVGP…AGQV) and 223 to 264 (PLES…GSEL). The span at 232–247 (GMPPAPQGRAPYPQPP) shows a compositional bias: pro residues. CCHC-type zinc fingers lie at residues 544 to 561 (GKCY…NCPV) and 580 to 597 (DLCP…QCRS). A disordered region spans residues 598 to 640 (KFDKNGQPLSGNEQRGQPQAPQQTGAFPIQPFVPHGFQGQQPP). A compositionally biased stretch (polar residues) spans 604-622 (QPLSGNEQRGQPQAPQQTG).

This sequence belongs to the beta type-B retroviral Gag protein family. HERV class-II K(HML-2) gag subfamily. In terms of processing, myristoylation is essential for retroviral assembly. Alteration of the glycine residue leads to a block in the budding of particles and an accumulation of Gag inside the cell. Specific enzymatic cleavages may yield mature proteins.

It localises to the cell membrane. Its function is as follows. The products of the Gag polyproteins of infectious retroviruses perform highly complex orchestrated tasks during the assembly, budding, maturation, and infection stages of the viral replication cycle. During viral assembly, the proteins form membrane associations and self-associations that ultimately result in budding of an immature virion from the infected cell. Gag precursors also function during viral assembly to selectively bind and package two plus strands of genomic RNA. Endogenous Gag proteins may have kept, lost or modified their original function during evolution. The polypeptide is Endogenous retrovirus group K member 19 Gag polyprotein (ERVK-19) (Homo sapiens (Human)).